A 428-amino-acid chain; its full sequence is MNIWKTLLLGMLVTGSAVSAPVELDKVAVIVNDGVILQSDIDTATKTLRANAKKSGQALPDADVLNEQIVDKLIIDTLQTQEADRIGVRIDDTRLNQAIEEIARNNNQTIDELSAAIASEGVSYAEFREQIRKEMAASEARNALVRRRINILPAEVDNLAELLSKETNASVEYRIGHIQLRFTDGQDKSALEAQAKELVEKLKQGADFSTMAYTYSKGPKALQGGDWGWMRKEEMPTIFADQIKMQNKGSIIGPFRSGVGFHILKIEDVKGLETVAVTEVNARHILLKPTVILSDEGAQRELNEFIRRIRAGEATFGELAQQYSQDPGSAAQDGELGYQTPDLYVPEFKHQVETLPVGTISEPFKTVHGWHIVEVLDRREVDRTDSAMKNKAYRILFNRKFNEEVGAWMQELRAGAFVEIINEEENDG.

The first 19 residues, 1–19 (MNIWKTLLLGMLVTGSAVS), serve as a signal peptide directing secretion. 2 PpiC domains span residues 170 to 268 (SVEY…KIED) and 277 to 377 (VTEV…EVLD).

It is found in the periplasm. The catalysed reaction is [protein]-peptidylproline (omega=180) = [protein]-peptidylproline (omega=0). Functionally, chaperone involved in the correct folding and assembly of outer membrane proteins. Recognizes specific patterns of aromatic residues and the orientation of their side chains, which are found more frequently in integral outer membrane proteins. May act in both early periplasmic and late outer membrane-associated steps of protein maturation. The sequence is that of Chaperone SurA from Vibrio vulnificus (strain CMCP6).